Reading from the N-terminus, the 323-residue chain is tRNA-modifying protein YgfZ (323 aa).

2 residues coordinate folate: tryptophan 29 and tryptophan 182.

The protein belongs to the tRNA-modifying YgfZ family.

The protein resides in the cytoplasm. Its function is as follows. Folate-binding protein involved in regulating the level of ATP-DnaA and in the modification of some tRNAs. It is probably a key factor in regulatory networks that act via tRNA modification, such as initiation of chromosomal replication. The polypeptide is tRNA-modifying protein YgfZ (Vibrio atlanticus (strain LGP32) (Vibrio splendidus (strain Mel32))).